Here is a 243-residue protein sequence, read N- to C-terminus: Homeobox protein nob-1 (243 aa).

The span at 1–12 shows a compositional bias: polar residues; that stretch reads MISVMQQMINND. 2 disordered regions span residues 1–23 and 40–67; these read MISVMQQMINNDSPEDSKESITS and SIQGESRSERESETGSSPQLAPSSTGMV. Residues 162–221 constitute a DNA-binding region (homeobox); sequence GKKKRQPYKKDQISRLEYEYSVNQYLTNKRRSELSAQLMLDEKQVKVWFQNRRMKDKKLR.

The protein belongs to the abd-b homeobox family. Interacts with nuclear receptor nhr-25. Interacts with geminin homolog gmn-1. Interacts with homeodomain protein ceh-20.

The protein localises to the nucleus. Functionally, transcription factor, involved in posterior embryonic patterning, morphogenetic movements of the posterior hypodermis, and cell fate specification. Binds to the 5'-TAGT-3' motif in regulatory elements of genes, including Meis protein psa-3 and microRNA mir-57. Involved in a negative regulatory loop with mir-57 to specify posterior cell identities. Required for asymmetric division of the T hypodermal cell, acting via the regulation of asymmetric expression of psa-3 in cooperation with ceh-20 and the Wnt-MAPK pathway. Involved in the regulation of the onset of non-apoptotic cell death in the linker cell, acting together with the Wnt signaling pathway. Involved in promoting embryogenesis, in concert with orphan nuclear receptor nhr-25. May regulate expression of transcription factor dmd-3. The protein is Homeobox protein nob-1 of Caenorhabditis elegans.